Reading from the N-terminus, the 372-residue chain is Cytochrome b (372 aa).

4 helical membrane-spanning segments follow: residues 25–45 (FGSM…FLAI), 69–90 (WIMQ…YIHI), 105–125 (WFSG…GYVL), and 170–190 (FFAL…IHII). Heme b contacts are provided by H75 and H89. Heme b is bound by residues H174 and H188. A ubiquinone is bound at residue H193. 4 helical membrane-spanning segments follow: residues 218 to 238 (YKDM…LSFM), 280 to 300 (LGGT…PFTH), 312 to 332 (LAQT…WTAT), and 339 to 358 (FILI…IMNP).

This sequence belongs to the cytochrome b family. The cytochrome bc1 complex contains 3 respiratory subunits (MT-CYB, CYC1 and UQCRFS1), 2 core proteins (UQCRC1 and UQCRC2) and probably 6 low-molecular weight proteins. Heme b is required as a cofactor.

Its subcellular location is the mitochondrion inner membrane. In terms of biological role, component of the ubiquinol-cytochrome c reductase complex (complex III or cytochrome b-c1 complex) that is part of the mitochondrial respiratory chain. The b-c1 complex mediates electron transfer from ubiquinol to cytochrome c. Contributes to the generation of a proton gradient across the mitochondrial membrane that is then used for ATP synthesis. The chain is Cytochrome b (MT-CYB) from Sinomicrurus japonicus (Coral snake).